A 749-amino-acid chain; its full sequence is Catalase-peroxidase (749 aa).

Residues 1 to 12 (MSSDTSDTRPPH) show a composition bias toward basic and acidic residues. The disordered stretch occupies residues 1–40 (MSSDTSDTRPPHSDSGTQSNSESENPIIDSPEPKAHAPLT). The span at 14–24 (DSGTQSNSESE) shows a compositional bias: polar residues. The tryptophyl-tyrosyl-methioninium (Trp-Tyr) (with M-266) cross-link spans 113 to 240 (WHAAGTYRIF…FGATTMGLIY (128 aa)). H114 (proton acceptor) is an active-site residue. The tryptophyl-tyrosyl-methioninium (Tyr-Met) (with W-113) cross-link spans 240–266 (YVNPEGPEGKPDPLAAAHDIRETFGRM). H281 lines the heme b pocket.

The protein belongs to the peroxidase family. Peroxidase/catalase subfamily. Homodimer or homotetramer. It depends on heme b as a cofactor. Formation of the three residue Trp-Tyr-Met cross-link is important for the catalase, but not the peroxidase activity of the enzyme.

It carries out the reaction H2O2 + AH2 = A + 2 H2O. The enzyme catalyses 2 H2O2 = O2 + 2 H2O. Functionally, bifunctional enzyme with both catalase and broad-spectrum peroxidase activity. The sequence is that of Catalase-peroxidase from Mycobacterium sp. (strain JLS).